A 1184-amino-acid polypeptide reads, in one-letter code: DNA-directed RNA polymerase subunit beta (1184 aa).

The segment at 1160 to 1184 (DDDFTNQNDAFNIVQPENAATEKTE) is disordered.

The protein belongs to the RNA polymerase beta chain family. In terms of assembly, the RNAP catalytic core consists of 2 alpha, 1 beta, 1 beta' and 1 omega subunit. When a sigma factor is associated with the core the holoenzyme is formed, which can initiate transcription.

It carries out the reaction RNA(n) + a ribonucleoside 5'-triphosphate = RNA(n+1) + diphosphate. In terms of biological role, DNA-dependent RNA polymerase catalyzes the transcription of DNA into RNA using the four ribonucleoside triphosphates as substrates. The sequence is that of DNA-directed RNA polymerase subunit beta from Listeria innocua serovar 6a (strain ATCC BAA-680 / CLIP 11262).